We begin with the raw amino-acid sequence, 489 residues long: MNLRDISGNAFPELKELLLSEIGAIEIGGITADSRKAAPGSLFVAVAGTKADGAAYVKDAVAKGAVAVVSGHAVEADVPVLVVTDPRLYLSLAASRFYGKQPDTMVAVTGTAGKTSVASFVRQIWAFAGHAAAQIGTTGVIAPGREDYGALTTPDPVTLHALLAELASEGVTHAAMEASSHGLDQRRLDGVHLSAAGFTNLGRDHMDYHPTIEDYMAAKMRLFDTLMEKGAPAVIFADDPWSDKAIGAAREAGLEVRTVGRNGQYLTLKRVEHFRHKQMIEVHHDGVIFEVDIPLAGDFQVANALVAAGLAMSTGVPAATALKALEKLVGAAGRLELVGQTKNGALAYVDYAHKPDALENVLTSVRPFTSGRIITVFGCGGDRDKGKRPIMGEVATRLSDIVIVTDDNPRSEDAATIRSEVMAAAAGALEIGDRAEAIRHAVSMLSHGDTLIVAGKGHEEGQIVGSVTLPFSDHEQVRSALAELEGSKI.

Serine 34 contacts UDP-N-acetyl-alpha-D-muramoyl-L-alanyl-D-glutamate. Glycine 110–serine 116 lines the ATP pocket. Residues threonine 152 to threonine 153, serine 179, glutamine 185, and arginine 187 contribute to the UDP-N-acetyl-alpha-D-muramoyl-L-alanyl-D-glutamate site. Lysine 219 carries the post-translational modification N6-carboxylysine. Meso-2,6-diaminopimelate-binding positions include arginine 383, aspartate 407–arginine 410, glycine 455, and glutamate 459. The short motif at aspartate 407 to arginine 410 is the Meso-diaminopimelate recognition motif element.

It belongs to the MurCDEF family. MurE subfamily. It depends on Mg(2+) as a cofactor. Carboxylation is probably crucial for Mg(2+) binding and, consequently, for the gamma-phosphate positioning of ATP.

It is found in the cytoplasm. It carries out the reaction UDP-N-acetyl-alpha-D-muramoyl-L-alanyl-D-glutamate + meso-2,6-diaminopimelate + ATP = UDP-N-acetyl-alpha-D-muramoyl-L-alanyl-gamma-D-glutamyl-meso-2,6-diaminopimelate + ADP + phosphate + H(+). The protein operates within cell wall biogenesis; peptidoglycan biosynthesis. In terms of biological role, catalyzes the addition of meso-diaminopimelic acid to the nucleotide precursor UDP-N-acetylmuramoyl-L-alanyl-D-glutamate (UMAG) in the biosynthesis of bacterial cell-wall peptidoglycan. The chain is UDP-N-acetylmuramoyl-L-alanyl-D-glutamate--2,6-diaminopimelate ligase from Agrobacterium fabrum (strain C58 / ATCC 33970) (Agrobacterium tumefaciens (strain C58)).